The chain runs to 93 residues: MIGKEATIPEVVLELQELVQPTADLHCYEELTEEPAEEEQCLTPYKIVAGCGCGARLRLYVLATNLGIRAQQELLLGDIQLVCPECRGRLRHE.

Residues 1–43 form an E7 terminal domain region; the sequence is MIGKEATIPEVVLELQELVQPTADLHCYEELTEEPAEEEQCLT. The LXCXE motif; interaction with host RB1 and TMEM173/STING signature appears at 25–29; it reads LHCYE. A zinc finger spans residues 51–86; the sequence is CGCGARLRLYVLATNLGIRAQQELLLGDIQLVCPEC. Residues 68–76 carry the Nuclear export signal motif; the sequence is IRAQQELLL.

It belongs to the papillomaviridae E7 protein family. In terms of assembly, homodimer. Homooligomer. Interacts with host RB1; this interaction induces dissociation of RB1-E2F1 complex thereby disrupting RB1 activity. Interacts with host EP300; this interaction represses EP300 transcriptional activity. Interacts with protein E2; this interaction inhibits E7 oncogenic activity. Interacts with host TMEM173/STING; this interaction impairs the ability of TMEM173/STING to sense cytosolic DNA and promote the production of type I interferon (IFN-alpha and IFN-beta). Highly phosphorylated.

It is found in the host cytoplasm. It localises to the host nucleus. Plays a role in viral genome replication by driving entry of quiescent cells into the cell cycle. Stimulation of progression from G1 to S phase allows the virus to efficiently use the cellular DNA replicating machinery to achieve viral genome replication. E7 protein has both transforming and trans-activating activities. Induces the disassembly of the E2F1 transcription factor from RB1, with subsequent transcriptional activation of E2F1-regulated S-phase genes. Interferes with host histone deacetylation mediated by HDAC1 and HDAC2, leading to transcription activation. Also plays a role in the inhibition of both antiviral and antiproliferative functions of host interferon alpha. Interaction with host TMEM173/STING impairs the ability of TMEM173/STING to sense cytosolic DNA and promote the production of type I interferon (IFN-alpha and IFN-beta). The protein is Protein E7 of Human papillomavirus 9.